A 337-amino-acid chain; its full sequence is WAT1-related protein At1g11460 (337 aa).

The next 10 membrane-spanning stretches (helical) occupy residues 14–34 (WPPIIVMVISQVAMGSVNALV), 46–66 (IIGAYRIAISSFILAPIAYIL), 83–103 (FISGLLGASLMQFFYLLGLSY), 107–127 (TVACALVSLMPAITFAFALIL), 139–159 (AGMIKVMGTIICISGALFLTF), 188–208 (WLLGCLYLTIGTVLISLWILF), 220–240 (FSSTCLMSIFAAFQCALLSLY), 254–274 (FVIGVIVYAGVIGQAMSTVSV), 284–304 (VFVSAIMPIALISASLFDFII), and 309–329 (LYLGSLIGSVGTITGLYVFLW). The EamA 1 domain occupies 27–157 (MGSVNALVKK…IICISGALFL (131 aa)). The region spanning 220–328 (FSSTCLMSIF…GTITGLYVFL (109 aa)) is the EamA 2 domain.

This sequence belongs to the drug/metabolite transporter (DMT) superfamily. Plant drug/metabolite exporter (P-DME) (TC 2.A.7.4) family.

It is found in the membrane. The polypeptide is WAT1-related protein At1g11460 (Arabidopsis thaliana (Mouse-ear cress)).